The primary structure comprises 183 residues: Large ribosomal subunit protein uL6 (183 aa).

It belongs to the universal ribosomal protein uL6 family. Part of the 50S ribosomal subunit.

Its function is as follows. This protein binds to the 23S rRNA, and is important in its secondary structure. It is located near the subunit interface in the base of the L7/L12 stalk, and near the tRNA binding site of the peptidyltransferase center. This is Large ribosomal subunit protein uL6 from Moorella thermoacetica (strain ATCC 39073 / JCM 9320).